A 440-amino-acid chain; its full sequence is Heat stress transcription factor A-4b (440 aa).

Residues 121-181 (NERKDYEEEI…QRSLISYVRE (61 aa)) adopt a coiled-coil conformation. A hydrophobic repeat HR-A/B region spans residues 133 to 183 (LKSDNAALSSELQNNTLKKLNMEKRMQALEEKLFVVEDQQRSLISYVREIV). Residues 158–163 (MQALEE) carry the Nuclear export signal motif. The Nuclear localization signal signature appears at 200-204 (RKKRR). Residues 264-417 (DISYDDGVPG…EMKSGDRQHL (154 aa)) form a disordered region. Residues 295–305 (SPPTRMRTSSA) show a composition bias toward polar residues. Over residues 333–343 (SRVDTRAKVSE) the composition is skewed to basic and acidic residues. Residues 375 to 384 (DGFWQQFLTE) carry the AHA motif. The segment covering 380-390 (QFLTEQPGSSD) has biased composition (polar residues). The span at 391–417 (AHQEAQSERRDGGNKVDEMKSGDRQHL) shows a compositional bias: basic and acidic residues.

This sequence belongs to the HSF family. Class A subfamily. Homotrimer. Exhibits temperature-dependent phosphorylation.

The protein localises to the cytoplasm. It is found in the nucleus. In terms of biological role, transcriptional regulator that specifically binds DNA of heat shock promoter elements (HSE). The protein is Heat stress transcription factor A-4b (HSFA4B) of Oryza sativa subsp. japonica (Rice).